The chain runs to 269 residues: Peptide deformylase 1B, chloroplastic (269 aa).

A chloroplast-targeting transit peptide spans 1–51; that stretch reads MAARLHLRLGPRLRGFASSFAPLLAAHPRALPLSRMGSVAPLAAARARRGF. Residues C168 and H210 each coordinate Fe cation. Residue E211 is part of the active site. A Fe cation-binding site is contributed by H214.

It belongs to the polypeptide deformylase family. As to quaternary structure, homodimer. The cofactor is Fe(2+). As to expression, mainly expressed in mature leaves and sheaths.

Its subcellular location is the plastid. It localises to the chloroplast stroma. The protein localises to the mitochondrion. It catalyses the reaction N-terminal N-formyl-L-methionyl-[peptide] + H2O = N-terminal L-methionyl-[peptide] + formate. Its activity is regulated as follows. Inhibited by actinonin. Removes the formyl group from the N-terminal Met of newly synthesized proteins. The chain is Peptide deformylase 1B, chloroplastic (PDF1B) from Oryza sativa subsp. japonica (Rice).